Consider the following 263-residue polypeptide: HLA class II histocompatibility antigen, DM beta chain (263 aa).

A signal peptide spans 1-18 (MITFLPLLLGLSLGCTGA). The interval 19-112 (GGFVAHVEST…PFWGSLTNRT (94 aa)) is beta-1. The Lumenal portion of the chain corresponds to 19 to 218 (GGFVAHVEST…PGLSPMQTLK (200 aa)). Disulfide bonds link C29–C97 and C43–C53. N110 is a glycosylation site (N-linked (GlcNAc...) asparagine). Positions 113–207 (RPPSVQVAKT…GAPEPILRDW (95 aa)) are beta-2. In terms of domain architecture, Ig-like C1-type spans 114–208 (PPSVQVAKTT…APEPILRDWT (95 aa)). C135 and C192 are disulfide-bonded. The segment at 208–218 (TPGLSPMQTLK) is connecting peptide. A helical membrane pass occupies residues 219-239 (VSVSAVTLGLGLIIFSLGVIS). Residues 240-263 (WRRAGHSSYTPLPGSNYSEGWHIS) lie on the Cytoplasmic side of the membrane. A YXXZ motif motif is present at residues 248 to 251 (YTPL).

The protein belongs to the MHC class II family. Heterodimer of an alpha chain (DMA) and a beta chain (DMB). Interacts with MHCII; this interaction mediates rapid selection of high-affinity peptides in a pH-dependent manner, with an optimum at pH 5.5.

It is found in the late endosome membrane. The protein resides in the lysosome membrane. Functionally, plays a critical role in catalyzing the release of class II-associated invariant chain peptide (CLIP) from newly synthesized MHC class II molecules and freeing the peptide binding site for acquisition of antigenic peptides. In B-cells, the interaction between HLA-DM and MHC class II molecules is regulated by HLA-DO. The protein is HLA class II histocompatibility antigen, DM beta chain (HLA-DMB) of Homo sapiens (Human).